The sequence spans 419 residues: L-rhamnose isomerase (419 aa).

Mn(2+) contacts are provided by His262, Asp294, and Asp296.

It belongs to the rhamnose isomerase family. As to quaternary structure, homotetramer. Mn(2+) is required as a cofactor.

Its subcellular location is the cytoplasm. The enzyme catalyses L-rhamnopyranose = L-rhamnulose. The protein operates within carbohydrate degradation; L-rhamnose degradation; glycerone phosphate from L-rhamnose: step 1/3. In terms of biological role, catalyzes the interconversion of L-rhamnose and L-rhamnulose. The protein is L-rhamnose isomerase of Shigella flexneri.